The sequence spans 124 residues: NAD(P)H-quinone oxidoreductase subunit 5, chloroplastic (124 aa).

The next 3 helical transmembrane spans lie at 22–42 (TPISALIHAATMVAAGIFLVA), 44–64 (LLPLFIVIPSIMTGIALIGII), and 91–111 (LGYMMLALGMGSYRAALFHLI).

The protein belongs to the complex I subunit 5 family. As to quaternary structure, NDH is composed of at least 16 different subunits, 5 of which are encoded in the nucleus.

The protein localises to the plastid. Its subcellular location is the chloroplast thylakoid membrane. It catalyses the reaction a plastoquinone + NADH + (n+1) H(+)(in) = a plastoquinol + NAD(+) + n H(+)(out). The enzyme catalyses a plastoquinone + NADPH + (n+1) H(+)(in) = a plastoquinol + NADP(+) + n H(+)(out). Its function is as follows. NDH shuttles electrons from NAD(P)H:plastoquinone, via FMN and iron-sulfur (Fe-S) centers, to quinones in the photosynthetic chain and possibly in a chloroplast respiratory chain. The immediate electron acceptor for the enzyme in this species is believed to be plastoquinone. Couples the redox reaction to proton translocation, and thus conserves the redox energy in a proton gradient. This Pisum sativum (Garden pea) protein is NAD(P)H-quinone oxidoreductase subunit 5, chloroplastic (ndhF).